Here is a 117-residue protein sequence, read N- to C-terminus: MSGAESFVPAPMYLTDAAAQRLGALVEEEGNPGLKLRVYVTGGGCSGFQYGFDFADTVGDEDTIIENGTASMVVDALSYQYLVGSTVDFEEGLAGARFIIKNPNATSTCGCGASFAV.

Iron-sulfur cluster is bound by residues C45, C109, and C111.

It belongs to the HesB/IscA family. Homodimer. Requires iron-sulfur cluster as cofactor.

In terms of biological role, required for insertion of 4Fe-4S clusters for at least IspG. The polypeptide is Iron-sulfur cluster insertion protein ErpA (Chromohalobacter salexigens (strain ATCC BAA-138 / DSM 3043 / CIP 106854 / NCIMB 13768 / 1H11)).